Reading from the N-terminus, the 229-residue chain is Cytochrome c oxidase subunit 2 (229 aa).

At 1 to 26 the chain is on the mitochondrial intermembrane side; it reads MSTWANLGLQDSASPLMEQLIFFHDH. The chain crosses the membrane as a helical span at residues 27-48; sequence ALLILVMITVLVGYLMFMLFFN. Residues 49 to 62 are Mitochondrial matrix-facing; that stretch reads SYVNRFLLHGQLIE. A helical membrane pass occupies residues 63–82; sequence MIWTILPAIILLFIAMPSLR. Topologically, residues 83–229 are mitochondrial intermembrane; sequence LLYLLDEINE…IKWISNSVNS (147 aa). Residues H161, C196, E198, C200, H204, and M207 each contribute to the Cu cation site. E198 provides a ligand contact to Mg(2+).

This sequence belongs to the cytochrome c oxidase subunit 2 family. In terms of assembly, component of the cytochrome c oxidase (complex IV, CIV), a multisubunit enzyme composed of a catalytic core of 3 subunits and several supernumerary subunits. The complex exists as a monomer or a dimer and forms supercomplexes (SCs) in the inner mitochondrial membrane with ubiquinol-cytochrome c oxidoreductase (cytochrome b-c1 complex, complex III, CIII). It depends on Cu cation as a cofactor.

The protein resides in the mitochondrion inner membrane. It carries out the reaction 4 Fe(II)-[cytochrome c] + O2 + 8 H(+)(in) = 4 Fe(III)-[cytochrome c] + 2 H2O + 4 H(+)(out). Its function is as follows. Component of the cytochrome c oxidase, the last enzyme in the mitochondrial electron transport chain which drives oxidative phosphorylation. The respiratory chain contains 3 multisubunit complexes succinate dehydrogenase (complex II, CII), ubiquinol-cytochrome c oxidoreductase (cytochrome b-c1 complex, complex III, CIII) and cytochrome c oxidase (complex IV, CIV), that cooperate to transfer electrons derived from NADH and succinate to molecular oxygen, creating an electrochemical gradient over the inner membrane that drives transmembrane transport and the ATP synthase. Cytochrome c oxidase is the component of the respiratory chain that catalyzes the reduction of oxygen to water. Electrons originating from reduced cytochrome c in the intermembrane space (IMS) are transferred via the dinuclear copper A center (CU(A)) of subunit 2 and heme A of subunit 1 to the active site in subunit 1, a binuclear center (BNC) formed by heme A3 and copper B (CU(B)). The BNC reduces molecular oxygen to 2 water molecules using 4 electrons from cytochrome c in the IMS and 4 protons from the mitochondrial matrix. This chain is Cytochrome c oxidase subunit 2 (mt:CoII), found in Drosophila miranda (Fruit fly).